The following is a 424-amino-acid chain: Glutamyl-tRNA reductase (424 aa).

Substrate contacts are provided by residues 49–52, Ser-107, 112–114, and Gln-118; these read TCNR and EPQ. The Nucleophile role is filled by Cys-50. 187–192 lines the NADP(+) pocket; it reads GAGETI.

It belongs to the glutamyl-tRNA reductase family. As to quaternary structure, homodimer.

The catalysed reaction is (S)-4-amino-5-oxopentanoate + tRNA(Glu) + NADP(+) = L-glutamyl-tRNA(Glu) + NADPH + H(+). The protein operates within porphyrin-containing compound metabolism; protoporphyrin-IX biosynthesis; 5-aminolevulinate from L-glutamyl-tRNA(Glu): step 1/2. Functionally, catalyzes the NADPH-dependent reduction of glutamyl-tRNA(Glu) to glutamate 1-semialdehyde (GSA). The sequence is that of Glutamyl-tRNA reductase from Chromohalobacter salexigens (strain ATCC BAA-138 / DSM 3043 / CIP 106854 / NCIMB 13768 / 1H11).